Here is a 92-residue protein sequence, read N- to C-terminus: Small ribosomal subunit protein uS19c (92 aa).

It belongs to the universal ribosomal protein uS19 family.

It localises to the plastid. The protein resides in the chloroplast. In terms of biological role, protein S19 forms a complex with S13 that binds strongly to the 16S ribosomal RNA. The polypeptide is Small ribosomal subunit protein uS19c (Chara vulgaris (Common stonewort)).